The primary structure comprises 363 residues: UDP-N-acetylglucosamine--N-acetylmuramyl-(pentapeptide) pyrophosphoryl-undecaprenol N-acetylglucosamine transferase (363 aa).

UDP-N-acetyl-alpha-D-glucosamine-binding positions include 14-16 (TGG), asparagine 122, arginine 163, serine 190, and glutamine 285.

Belongs to the glycosyltransferase 28 family. MurG subfamily.

Its subcellular location is the cell inner membrane. The enzyme catalyses di-trans,octa-cis-undecaprenyl diphospho-N-acetyl-alpha-D-muramoyl-L-alanyl-D-glutamyl-meso-2,6-diaminopimeloyl-D-alanyl-D-alanine + UDP-N-acetyl-alpha-D-glucosamine = di-trans,octa-cis-undecaprenyl diphospho-[N-acetyl-alpha-D-glucosaminyl-(1-&gt;4)]-N-acetyl-alpha-D-muramoyl-L-alanyl-D-glutamyl-meso-2,6-diaminopimeloyl-D-alanyl-D-alanine + UDP + H(+). It functions in the pathway cell wall biogenesis; peptidoglycan biosynthesis. Cell wall formation. Catalyzes the transfer of a GlcNAc subunit on undecaprenyl-pyrophosphoryl-MurNAc-pentapeptide (lipid intermediate I) to form undecaprenyl-pyrophosphoryl-MurNAc-(pentapeptide)GlcNAc (lipid intermediate II). This chain is UDP-N-acetylglucosamine--N-acetylmuramyl-(pentapeptide) pyrophosphoryl-undecaprenol N-acetylglucosamine transferase, found in Prochlorococcus marinus (strain MIT 9301).